We begin with the raw amino-acid sequence, 688 residues long: Glycine--tRNA ligase beta subunit (688 aa).

This sequence belongs to the class-II aminoacyl-tRNA synthetase family. As to quaternary structure, tetramer of two alpha and two beta subunits.

It localises to the cytoplasm. The catalysed reaction is tRNA(Gly) + glycine + ATP = glycyl-tRNA(Gly) + AMP + diphosphate. The polypeptide is Glycine--tRNA ligase beta subunit (Aliivibrio fischeri (strain ATCC 700601 / ES114) (Vibrio fischeri)).